A 212-amino-acid chain; its full sequence is External core antigen (212 aa).

Residues 1 to 19 (MQLFHLCLIISCSCPTVQA) form the signal peptide. Positions 25–27 (GWL) are HBEAG. The segment at 179-212 (RQRGRTIRRRTPSPRRRRSQSPRRRRSQSRESQC) is disordered. Residues 180–205 (QRGRTIRRRTPSPRRRRSQSPRRRRS) are compositionally biased toward basic residues. The 1; half-length repeat unit spans residues 184-190 (TIRRRTP). The interval 184-206 (TIRRRTPSPRRRRSQSPRRRRSQ) is 3 X 8 AA repeats of S-P-R-R-R-R-S-Q. Positions 184 to 212 (TIRRRTPSPRRRRSQSPRRRRSQSRESQC) are excised as a propeptide. A run of 2 repeats spans residues 191 to 198 (SPRRRRSQ) and 199 to 206 (SPRRRRSQ).

Belongs to the orthohepadnavirus precore antigen family. As to quaternary structure, homodimerizes. Post-translationally, phosphorylated. In terms of processing, cleaved by host furin.

It is found in the secreted. The protein localises to the host nucleus. Functionally, may regulate immune response to the intracellular capsid in acting as a T-cell tolerogen, by having an immunoregulatory effect which prevents destruction of infected cells by cytotoxic T-cells. This immune regulation may predispose to chronicity during perinatal infections and prevent severe liver injury during adult infections. The sequence is that of External core antigen from Hepatitis B virus genotype D subtype ayw (isolate Australia/AustKW/1991) (HBV-D).